The following is a 208-amino-acid chain: FMN-dependent NADH:quinone oxidoreductase (208 aa).

FMN-binding positions include 17 to 19, 99 to 102, and 143 to 146; these read SNS, MWNL, and SRGG.

Belongs to the azoreductase type 1 family. Homodimer. Requires FMN as cofactor.

It catalyses the reaction 2 a quinone + NADH + H(+) = 2 a 1,4-benzosemiquinone + NAD(+). The catalysed reaction is N,N-dimethyl-1,4-phenylenediamine + anthranilate + 2 NAD(+) = 2-(4-dimethylaminophenyl)diazenylbenzoate + 2 NADH + 2 H(+). Functionally, quinone reductase that provides resistance to thiol-specific stress caused by electrophilic quinones. Also exhibits azoreductase activity. Catalyzes the reductive cleavage of the azo bond in aromatic azo compounds to the corresponding amines. This is FMN-dependent NADH:quinone oxidoreductase from Staphylococcus haemolyticus (strain JCSC1435).